Reading from the N-terminus, the 135-residue chain is NADPH-dependent 7-cyano-7-deazaguanine reductase (135 aa).

Residue C48 is the Thioimide intermediate of the active site. D55 (proton donor) is an active-site residue. Substrate-binding positions include 70-72 (LEL) and 89-90 (HE).

Belongs to the GTP cyclohydrolase I family. QueF type 1 subfamily.

It localises to the cytoplasm. The catalysed reaction is 7-aminomethyl-7-carbaguanine + 2 NADP(+) = 7-cyano-7-deazaguanine + 2 NADPH + 3 H(+). It participates in tRNA modification; tRNA-queuosine biosynthesis. In terms of biological role, catalyzes the NADPH-dependent reduction of 7-cyano-7-deazaguanine (preQ0) to 7-aminomethyl-7-deazaguanine (preQ1). The sequence is that of NADPH-dependent 7-cyano-7-deazaguanine reductase from Prochlorococcus marinus (strain SARG / CCMP1375 / SS120).